Here is a 376-residue protein sequence, read N- to C-terminus: N-acetyldiaminopimelate deacetylase (376 aa).

The active site involves aspartate 69. Glutamate 128 (proton acceptor) is an active-site residue.

The protein belongs to the peptidase M20A family. N-acetyldiaminopimelate deacetylase subfamily.

It carries out the reaction N-acetyl-(2S,6S)-2,6-diaminopimelate + H2O = (2S,6S)-2,6-diaminopimelate + acetate. The protein operates within amino-acid biosynthesis; L-lysine biosynthesis via DAP pathway; LL-2,6-diaminopimelate from (S)-tetrahydrodipicolinate (acetylase route): step 3/3. Functionally, catalyzes the conversion of N-acetyl-diaminopimelate to diaminopimelate and acetate. The chain is N-acetyldiaminopimelate deacetylase from Streptococcus pneumoniae (strain Taiwan19F-14).